A 291-amino-acid chain; its full sequence is ATP synthase gamma chain (291 aa).

Belongs to the ATPase gamma chain family. In terms of assembly, F-type ATPases have 2 components, CF(1) - the catalytic core - and CF(0) - the membrane proton channel. CF(1) has five subunits: alpha(3), beta(3), gamma(1), delta(1), epsilon(1). CF(0) has three main subunits: a, b and c.

It is found in the cell membrane. In terms of biological role, produces ATP from ADP in the presence of a proton gradient across the membrane. The gamma chain is believed to be important in regulating ATPase activity and the flow of protons through the CF(0) complex. This is ATP synthase gamma chain from Streptococcus pyogenes serotype M49 (strain NZ131).